A 473-amino-acid polypeptide reads, in one-letter code: MTAIYNTLTRQKEPFAPIDPENVRMYVCGMTVYDYCHLGHARVMVVFDMIARWLRECGYPLTYVRNITDIDDKIIARAAENGETIGELNARFIQAMHEDADALGVLRPDIEPKATENIPQMIAMIETLIQNGKAYPAANGDVYYAVREFAAYGQLSGKSLDDLRAGERVEVDGFKRDPLDFVLWKAAKAGEPAWESPWGNGRPGWHIECSAMSENLFGDTFDIHGGGADLQFPHHENEIAQSVGASGHTCGHDHAQTHHGQSIASHVKYWLHNGFIRVDGEKMSKSLGNFFTIREVLKQYDPEVVRFFILRAHYRSPLNYSDAHLDDAKGALTRLYTTLKNTPAAEFDLSENANGYTRRFYAAMNDDFGTVEAVAVLFELAGEVNKTNDAHLAGCLKALGGIIGLLQRNPIEFLQGGAVSDGLSNEEIEDLIARRKQARADKNWAESDRIRDLLNEHKIILEDSAGGTTWRRG.

Cys-28 is a binding site for Zn(2+). Positions 30 to 40 match the 'HIGH' region motif; sequence MTVYDYCHLGH. Cys-209, His-234, and Glu-238 together coordinate Zn(2+). The 'KMSKS' region signature appears at 282–286; the sequence is KMSKS. Residue Lys-285 participates in ATP binding.

This sequence belongs to the class-I aminoacyl-tRNA synthetase family. Monomer. Zn(2+) is required as a cofactor.

Its subcellular location is the cytoplasm. The catalysed reaction is tRNA(Cys) + L-cysteine + ATP = L-cysteinyl-tRNA(Cys) + AMP + diphosphate. This Neisseria gonorrhoeae (strain ATCC 700825 / FA 1090) protein is Cysteine--tRNA ligase.